Consider the following 332-residue polypeptide: Transaldolase (332 aa).

Lysine 136 serves as the catalytic Schiff-base intermediate with substrate.

Belongs to the transaldolase family. Type 1 subfamily.

The protein localises to the cytoplasm. It carries out the reaction D-sedoheptulose 7-phosphate + D-glyceraldehyde 3-phosphate = D-erythrose 4-phosphate + beta-D-fructose 6-phosphate. The protein operates within carbohydrate degradation; pentose phosphate pathway; D-glyceraldehyde 3-phosphate and beta-D-fructose 6-phosphate from D-ribose 5-phosphate and D-xylulose 5-phosphate (non-oxidative stage): step 2/3. Its function is as follows. Transaldolase is important for the balance of metabolites in the pentose-phosphate pathway. This chain is Transaldolase, found in Nostoc sp. (strain PCC 7120 / SAG 25.82 / UTEX 2576).